The following is a 300-amino-acid chain: Ribosomal protein L11 methyltransferase (300 aa).

The S-adenosyl-L-methionine site is built by threonine 152, glycine 173, aspartate 195, and asparagine 234.

This sequence belongs to the methyltransferase superfamily. PrmA family.

The protein localises to the cytoplasm. The catalysed reaction is L-lysyl-[protein] + 3 S-adenosyl-L-methionine = N(6),N(6),N(6)-trimethyl-L-lysyl-[protein] + 3 S-adenosyl-L-homocysteine + 3 H(+). Its function is as follows. Methylates ribosomal protein L11. This chain is Ribosomal protein L11 methyltransferase, found in Cupriavidus necator (strain ATCC 17699 / DSM 428 / KCTC 22496 / NCIMB 10442 / H16 / Stanier 337) (Ralstonia eutropha).